The primary structure comprises 374 residues: Beta sliding clamp (374 aa).

The protein belongs to the beta sliding clamp family. As to quaternary structure, forms a ring-shaped head-to-tail homodimer around DNA which binds and tethers DNA polymerases and other proteins to the DNA. The DNA replisome complex has a single clamp-loading complex (3 tau and 1 each of delta, delta', psi and chi subunits) which binds 3 Pol III cores (1 core on the leading strand and 2 on the lagging strand) each with a beta sliding clamp dimer. Additional proteins in the replisome are other copies of gamma, psi and chi, Ssb, DNA helicase and RNA primase.

It is found in the cytoplasm. Confers DNA tethering and processivity to DNA polymerases and other proteins. Acts as a clamp, forming a ring around DNA (a reaction catalyzed by the clamp-loading complex) which diffuses in an ATP-independent manner freely and bidirectionally along dsDNA. Initially characterized for its ability to contact the catalytic subunit of DNA polymerase III (Pol III), a complex, multichain enzyme responsible for most of the replicative synthesis in bacteria; Pol III exhibits 3'-5' exonuclease proofreading activity. The beta chain is required for initiation of replication as well as for processivity of DNA replication. The chain is Beta sliding clamp (dnaN) from Helicobacter pylori (strain ATCC 700392 / 26695) (Campylobacter pylori).